The sequence spans 777 residues: Rho-GTPase-activating protein 8 (777 aa).

An F-BAR domain is found at Ser3–Asp420. Residues Gln117–Ile172 adopt a coiled-coil conformation. One can recognise a DEP domain in the interval Val213–Gly296. In terms of domain architecture, Rho-GAP spans Val454–Phe650. Residues Leu667 to Ser709 are disordered. Over residues Tyr668–Ser692 the composition is skewed to polar residues. 2 positions are modified to phosphoserine: Ser676 and Ser680. The residue at position 682 (Thr682) is a Phosphothreonine. At Ser686 the chain carries Phosphoserine. Phosphothreonine is present on Thr694. A Phosphoserine modification is found at Ser698.

Interacts with pak1/shk1. In terms of processing, phosphorylated by pak1/shk1.

The protein resides in the cytoplasm. In terms of biological role, acts in signal transduction. Negatively regulates the pak1/shk1 control pathway. This chain is Rho-GTPase-activating protein 8 (rga8), found in Schizosaccharomyces pombe (strain 972 / ATCC 24843) (Fission yeast).